Reading from the N-terminus, the 402-residue chain is Putative cystathionine beta-lyase (402 aa).

N6-(pyridoxal phosphate)lysine is present on Lys236.

Belongs to the class-II pyridoxal-phosphate-dependent aminotransferase family. MalY/PatB cystathionine beta-lyase subfamily. The cofactor is pyridoxal 5'-phosphate.

It carries out the reaction L,L-cystathionine + H2O = L-homocysteine + pyruvate + NH4(+). The enzyme catalyses an S-substituted L-cysteine + H2O = a thiol + pyruvate + NH4(+). It participates in amino-acid biosynthesis; L-methionine biosynthesis via de novo pathway; L-homocysteine from L-cystathionine: step 1/1. In Mycobacterium leprae (strain TN), this protein is Putative cystathionine beta-lyase.